A 257-amino-acid polypeptide reads, in one-letter code: NAD-capped RNA hydrolase NudC (257 aa).

Substrate contacts are provided by lysine 25 and arginine 69. Zn(2+) is bound by residues cysteine 98 and cysteine 101. A substrate-binding site is contributed by glutamate 111. The Zn(2+) site is built by cysteine 116 and cysteine 119. Residue tyrosine 124 participates in substrate binding. The region spanning 125 to 248 (PQIAPCIIVA…TVARRLIEDT (124 aa)) is the Nudix hydrolase domain. Alanine 158, glutamate 174, and glutamate 178 together coordinate a divalent metal cation. Residues 159–180 (GFVEVGETLEQAVAREVMEESG) carry the Nudix box motif. Substrate is bound at residue 192 to 199 (QPWPFPQS). A divalent metal cation is bound at residue glutamate 219. Residue alanine 241 coordinates substrate.

It belongs to the Nudix hydrolase family. NudC subfamily. Homodimer. Requires Mg(2+) as cofactor. Mn(2+) serves as cofactor. The cofactor is Zn(2+).

It catalyses the reaction a 5'-end NAD(+)-phospho-ribonucleoside in mRNA + H2O = a 5'-end phospho-adenosine-phospho-ribonucleoside in mRNA + beta-nicotinamide D-ribonucleotide + 2 H(+). The catalysed reaction is NAD(+) + H2O = beta-nicotinamide D-ribonucleotide + AMP + 2 H(+). It carries out the reaction NADH + H2O = reduced beta-nicotinamide D-ribonucleotide + AMP + 2 H(+). Its function is as follows. mRNA decapping enzyme that specifically removes the nicotinamide adenine dinucleotide (NAD) cap from a subset of mRNAs by hydrolyzing the diphosphate linkage to produce nicotinamide mononucleotide (NMN) and 5' monophosphate mRNA. The NAD-cap is present at the 5'-end of some mRNAs and stabilizes RNA against 5'-processing. Has preference for mRNAs with a 5'-end purine. Catalyzes the hydrolysis of a broad range of dinucleotide pyrophosphates. The protein is NAD-capped RNA hydrolase NudC of Escherichia coli O157:H7.